Here is a 270-residue protein sequence, read N- to C-terminus: 5'-AMP-activated protein kinase subunit beta-1 (270 aa).

A disordered region spans residues 1–44; it reads MGNTSSERAALDRQGGHKTPRRDSSGGSKDGDRPKILMDSPEDA. The N-myristoyl glycine moiety is linked to residue glycine 2. Threonine 4 is subject to Phosphothreonine. Serine 5 and serine 6 each carry phosphoserine. Residues 9-36 show a composition bias toward basic and acidic residues; sequence AALDRQGGHKTPRRDSSGGSKDGDRPKI. Threonine 19 is subject to Phosphothreonine. Serine 24 and serine 25 each carry phosphoserine; by autocatalysis. 3 positions are modified to phosphoserine: serine 40, serine 96, and serine 101. Positions 68–163 are glycogen-binding domain; sequence EVNDKAPAQA…QVKKTDFEVF (96 aa). A Phosphoserine; by autocatalysis modification is found at serine 108. Position 148 is a phosphothreonine (threonine 148). Position 182 is a phosphoserine (serine 182). Lysine 201 bears the N6-succinyllysine mark.

This sequence belongs to the 5'-AMP-activated protein kinase beta subunit family. AMPK is a heterotrimer of an alpha catalytic subunit (PRKAA1 or PRKAA2), a beta (PRKAB1 or PRKAB2) and a gamma non-catalytic subunits (PRKAG1, PRKAG2 or PRKAG3). Interacts with FNIP1 and FNIP2. Post-translationally, phosphorylated when associated with the catalytic subunit (PRKAA1 or PRKAA2). Phosphorylated by ULK1; leading to negatively regulate AMPK activity and suggesting the existence of a regulatory feedback loop between ULK1 and AMPK.

Functionally, non-catalytic subunit of AMP-activated protein kinase (AMPK), an energy sensor protein kinase that plays a key role in regulating cellular energy metabolism. In response to reduction of intracellular ATP levels, AMPK activates energy-producing pathways and inhibits energy-consuming processes: inhibits protein, carbohydrate and lipid biosynthesis, as well as cell growth and proliferation. AMPK acts via direct phosphorylation of metabolic enzymes, and by longer-term effects via phosphorylation of transcription regulators. Also acts as a regulator of cellular polarity by remodeling the actin cytoskeleton; probably by indirectly activating myosin. Beta non-catalytic subunit acts as a scaffold on which the AMPK complex assembles, via its C-terminus that bridges alpha (PRKAA1 or PRKAA2) and gamma subunits (PRKAG1, PRKAG2 or PRKAG3). The polypeptide is 5'-AMP-activated protein kinase subunit beta-1 (PRKAB1) (Bos taurus (Bovine)).